Here is a 231-residue protein sequence, read N- to C-terminus: MKIKAISIDIDGTITYPNRMIHEKALEAIRRAESLGIPIMLVTGNTVQFAEAASILIGTSGPVVAEDGGAISYKKKRIFLASMDEEWILWNEIRKRFPNARTSYTMPDRRAGLVIMRETINVETVREIINELNLNLVAVDSGFAIHVKKPWINKGSGIEKASEFLGIKPKEVAHVGDGENDLDAFKVVGYKVAVAQAPKILKENADYVTKKEYGEGGAEAIYHILEKFGYL.

The active-site Nucleophile is Asp-9. Mg(2+) is bound by residues Asp-9 and Asp-11. Asp-11 (proton donor) is an active-site residue. Lys-154 contacts substrate. Mg(2+) contacts are provided by Asp-177 and Asp-181.

It belongs to the archaeal SPP-like hydrolase family. In terms of assembly, homodimer. It depends on Mg(2+) as a cofactor.

It catalyses the reaction 2-phosphoglycolate + H2O = glycolate + phosphate. Catalyzes the dephosphorylation of 2-phosphoglycolate. Has phosphatase activity towards p-nitrophenylphosphate (in vitro). The sequence is that of Phosphoglycolate phosphatase from Pyrococcus horikoshii (strain ATCC 700860 / DSM 12428 / JCM 9974 / NBRC 100139 / OT-3).